We begin with the raw amino-acid sequence, 189 residues long: uncharacterized protein (189 aa).

A signal peptide spans 1 to 20 (MKFSTVGFLFSTILFKSAFA). The EF-hand domain occupies 74 to 109 (KKNEVLVDVLKKCDPSGNRRITLDEFLAFRKNGGEL). The Ca(2+) site is built by Asp87, Ser89, Asn91, Arg93, and Glu98.

It localises to the endoplasmic reticulum lumen. The protein resides in the golgi apparatus lumen. This is an uncharacterized protein from Schizosaccharomyces pombe (strain 972 / ATCC 24843) (Fission yeast).